Reading from the N-terminus, the 473-residue chain is Hyaluronidase-2 (473 aa).

An N-terminal signal peptide occupies residues 1 to 20 (MWTGLGPAVTLALVLVVAWA). Cystine bridges form between cysteine 47–cysteine 343 and cysteine 214–cysteine 230. N-linked (GlcNAc...) asparagine glycosylation is found at asparagine 77 and asparagine 106. The Proton donor role is filled by glutamate 138. Residues asparagine 340 and asparagine 360 are each glycosylated (N-linked (GlcNAc...) asparagine). Residues 364–442 (AAQYCSWAQC…YLGWGGEQCQ (79 aa)) enclose the EGF-like domain. Intrachain disulfides connect cysteine 368–cysteine 379, cysteine 373–cysteine 430, and cysteine 432–cysteine 441. Glycine 451 carries GPI-anchor amidated glycine lipidation. Residues 452–473 (ASGAWAGSHLTGLLAVAVLAFT) constitute a propeptide, removed in mature form.

This sequence belongs to the glycosyl hydrolase 56 family. Interacts with MST1R.

Its subcellular location is the cell membrane. The catalysed reaction is Random hydrolysis of (1-&gt;4)-linkages between N-acetyl-beta-D-glucosamine and D-glucuronate residues in hyaluronate.. Its function is as follows. Catalyzes hyaluronan degradation into small fragments that are endocytosed and degraded in lysosomes by HYAL1 and exoglycosidases. Essential for the breakdown of extracellular matrix hyaluronan. The sequence is that of Hyaluronidase-2 (HYAL2) from Bos taurus (Bovine).